The chain runs to 384 residues: Toluene efflux pump periplasmic linker protein TtgA (384 aa).

Positions 1–22 are cleaved as a signal peptide; that stretch reads MQFKPAVTALVSAVALATLLSG. The N-palmitoyl cysteine moiety is linked to residue Cys23. A lipid anchor (S-diacylglycerol cysteine) is attached at Cys23. Residues 115–155 adopt a coiled-coil conformation; it reads LAERYKQLIDEQAVSKQEYDDANAKRLQAEASLKSAQIDLR. The interval 362–384 is disordered; sequence ATNVKKPAGPDQANAAKADAKAE. Over residues 368 to 378 the composition is skewed to low complexity; sequence PAGPDQANAAK.

This sequence belongs to the membrane fusion protein (MFP) (TC 8.A.1) family.

The protein resides in the cell inner membrane. Functionally, the periplasmic linker protein component of a constitutive organic solvent efflux system. Involved in export of toluene, styrene, m-xylene, propylbenzene and ethylbenzene. Also exports AMP and the antibiotics carbenicillin, nalidixic acid, chloramphenicol and tetracycline. The sequence is that of Toluene efflux pump periplasmic linker protein TtgA (ttgA) from Pseudomonas putida (strain DOT-T1E).